We begin with the raw amino-acid sequence, 47 residues long: Large ribosomal subunit protein eL40 (47 aa).

This sequence belongs to the eukaryotic ribosomal protein eL40 family.

The polypeptide is Large ribosomal subunit protein eL40 (Methanococcus maripaludis (strain C5 / ATCC BAA-1333)).